We begin with the raw amino-acid sequence, 402 residues long: Probable 2,3-bisphosphoglycerate-independent phosphoglycerate mutase (402 aa).

The protein belongs to the BPG-independent phosphoglycerate mutase family. A-PGAM subfamily.

It catalyses the reaction (2R)-2-phosphoglycerate = (2R)-3-phosphoglycerate. It functions in the pathway carbohydrate degradation; glycolysis; pyruvate from D-glyceraldehyde 3-phosphate: step 3/5. In terms of biological role, catalyzes the interconversion of 2-phosphoglycerate and 3-phosphoglycerate. The protein is Probable 2,3-bisphosphoglycerate-independent phosphoglycerate mutase of Thermosipho africanus (strain TCF52B).